A 438-amino-acid chain; its full sequence is UDP-N-acetylmuramoylalanine--D-glutamate ligase (438 aa).

Position 112–118 (112–118) interacts with ATP; that stretch reads GSNGKST.

Belongs to the MurCDEF family.

The protein resides in the cytoplasm. It carries out the reaction UDP-N-acetyl-alpha-D-muramoyl-L-alanine + D-glutamate + ATP = UDP-N-acetyl-alpha-D-muramoyl-L-alanyl-D-glutamate + ADP + phosphate + H(+). It functions in the pathway cell wall biogenesis; peptidoglycan biosynthesis. Functionally, cell wall formation. Catalyzes the addition of glutamate to the nucleotide precursor UDP-N-acetylmuramoyl-L-alanine (UMA). The chain is UDP-N-acetylmuramoylalanine--D-glutamate ligase from Sodalis glossinidius (strain morsitans).